We begin with the raw amino-acid sequence, 238 residues long: Small ribosomal subunit protein uS2c (238 aa).

Belongs to the universal ribosomal protein uS2 family.

It is found in the plastid. Its subcellular location is the chloroplast. The sequence is that of Small ribosomal subunit protein uS2c (rps2) from Nuphar advena (Common spatterdock).